The following is a 416-amino-acid chain: Phosphoglycerate kinase (416 aa).

(2R)-3-phosphoglycerate is bound by residues valine 23, aspartate 24, phenylalanine 25, asparagine 26, glutamine 38, arginine 39, serine 62, histidine 63, glycine 65, arginine 66, leucine 121, arginine 122, histidine 168, and arginine 169. An ADP-binding site is contributed by glycine 212. Glycine 212 contacts CDP. Residues alanine 213 and lysine 214 each coordinate AMP. Alanine 213 provides a ligand contact to ATP. Mg(2+) is bound at residue alanine 213. Aspartate 217 serves as a coordination point for CDP. Mg(2+) is bound at residue aspartate 217. AMP is bound at residue lysine 218. Lysine 218 contacts ATP. Glycine 236 contacts ADP. A CDP-binding site is contributed by glycine 236. Positions 237 and 311 each coordinate AMP. 2 residues coordinate ATP: glycine 237 and glycine 311. Residues glycine 336 and phenylalanine 341 each coordinate CDP. Phenylalanine 341 serves as a coordination point for ADP. Glutamate 342 provides a ligand contact to AMP. ATP contacts are provided by glutamate 342, aspartate 373, and threonine 374. Aspartate 373 serves as a coordination point for Mg(2+).

This sequence belongs to the phosphoglycerate kinase family. Monomer. It depends on Mg(2+) as a cofactor.

Its subcellular location is the cytoplasm. It is found in the mitochondrion. It catalyses the reaction (2R)-3-phosphoglycerate + ATP = (2R)-3-phospho-glyceroyl phosphate + ADP. The protein operates within carbohydrate degradation; glycolysis; pyruvate from D-glyceraldehyde 3-phosphate: step 2/5. In terms of biological role, catalyzes one of the two ATP producing reactions in the glycolytic pathway via the reversible conversion of 1,3-diphosphoglycerate to 3-phosphoglycerate. Both L- and D- forms of purine and pyrimidine nucleotides can be used as substrates, but the activity is much lower on pyrimidines. Negatively regulates the biosynthesis of acetyl-CoA from pyruvate in the mitochondrion. The protein is Phosphoglycerate kinase (PGK1) of Komagataella pastoris (Yeast).